The primary structure comprises 117 residues: uncharacterized protein (117 aa).

Residues 57 to 77 (LGFPLGLLVFLHSLIVARFFV) traverse the membrane as a helical segment.

Its subcellular location is the membrane. This is an uncharacterized protein from Schizosaccharomyces pombe (strain 972 / ATCC 24843) (Fission yeast).